Reading from the N-terminus, the 467-residue chain is Solute carrier family 52, riboflavin transporter, member 3 (467 aa).

Residues Met-1–Ala-2 are Cytoplasmic-facing. The helical transmembrane segment at Phe-3–Leu-23 threads the bilayer. Over Trp-24–Tyr-43 the chain is Extracellular. The chain crosses the membrane as a helical span at residues Leu-44 to Phe-64. Residues Arg-65–Glu-71 lie on the Cytoplasmic side of the membrane. Residues Val-72–Leu-92 traverse the membrane as a helical segment. The Extracellular segment spans residues Trp-93–Ser-105. N-linked (GlcNAc...) asparagine glycosylation occurs at Asn-94. Residues Ile-106 to Phe-126 form a helical membrane-spanning segment. The Cytoplasmic segment spans residues Leu-127–Tyr-137. Residues Leu-138 to Ala-158 form a helical membrane-spanning segment. At Gln-159–Pro-220 the chain is on the extracellular side. A glycan (N-linked (GlcNAc...) asparagine) is linked at Asn-168. A helical membrane pass occupies residues Leu-221–Leu-241. Topologically, residues Gln-242 to His-294 are cytoplasmic. Ser-251 is modified (phosphoserine). The tract at residues Arg-266–Glu-288 is disordered. Over residues Gln-268 to Glu-288 the composition is skewed to basic and acidic residues. The helical transmembrane segment at Leu-295–Val-315 threads the bilayer. The Extracellular portion of the chain corresponds to Leu-316 to His-333. A helical transmembrane segment spans residues Leu-334–Pro-354. The Cytoplasmic segment spans residues Asn-355–Pro-359. Residues Phe-360 to Val-380 form a helical membrane-spanning segment. At Met-381–Glu-394 the chain is on the extracellular side. The helical transmembrane segment at Val-395–Leu-415 threads the bilayer. Over Gly-416–Ser-425 the chain is Cytoplasmic. A helical transmembrane segment spans residues Ala-426–Phe-446. Topologically, residues Pro-447–Ala-467 are extracellular.

This sequence belongs to the riboflavin transporter family.

Its subcellular location is the cell membrane. It catalyses the reaction riboflavin(in) = riboflavin(out). Functionally, plasma membrane transporter mediating the uptake by cells of the water soluble vitamin B2/riboflavin that plays a key role in biochemical oxidation-reduction reactions of the carbohydrate, lipid, and amino acid metabolism. This chain is Solute carrier family 52, riboflavin transporter, member 3 (SLC52A3), found in Bos taurus (Bovine).